The sequence spans 251 residues: MYILISNDDGYQAEGILKLAERLGTVARVTVMAPERDRSGASNSLTLEDPIRVHPIEPDRFRVQGTPTDCVHLALTGLLEEDPDMVFSGINAGANLGDDVLYSGTVAAAMEGRYLGLPAVAISLAGTWAPVHYDTAARVAVKLLEQIQDDPLPPDSILNVNVPDLPWDEIQGFHATRLGCRHRAEPVIKQHDPRGRTIYWVGPPGSEQDAGPGTDFYAVRNGFVSVTPIQVDLTRHAGLEQVRGWLDGVTW.

A divalent metal cation is bound by residues Asp8, Asp9, Ser39, and Asn91.

This sequence belongs to the SurE nucleotidase family. A divalent metal cation is required as a cofactor.

Its subcellular location is the cytoplasm. The enzyme catalyses a ribonucleoside 5'-phosphate + H2O = a ribonucleoside + phosphate. In terms of biological role, nucleotidase that shows phosphatase activity on nucleoside 5'-monophosphates. In Halorhodospira halophila (strain DSM 244 / SL1) (Ectothiorhodospira halophila (strain DSM 244 / SL1)), this protein is 5'-nucleotidase SurE.